Reading from the N-terminus, the 775-residue chain is Transcription activator of gluconeogenesis HCBG_00867 (775 aa).

The segment at 1 to 70 (MTASTQNGSP…NAKDPLRPRR (70 aa)) is disordered. Polar residues-rich tracts occupy residues 21–41 (NQESKNMTANPADASESQSPA) and 48–60 (TAESGQKHTSTAA). A DNA-binding region (zn(2)-C6 fungal-type) is located at residues 77–105 (CFACQRAHLTCGDERPCQRCIKRGLQDAC). Disordered stretches follow at residues 179–248 (TQAK…PFGA), 286–351 (GAGD…NIYN), 556–592 (NLNVNTGGSSPRGSGTFTPRNGNGVDPHSGMSAAGGG), and 649–725 (QGKE…SPKQ). A compositionally biased stretch (polar residues) spans 195–217 (MQDTSINPSAFQAPSPTSTPNFD). Residues 218–229 (LSSNPPNRNLSS) are compositionally biased toward low complexity. Composition is skewed to polar residues over residues 230–244 (AMTQTPSSASNQTQD), 292–323 (PSDSATQRGSIGRSSGTFTAQNFGDSTNTQSP), 334–351 (WNPSGQSQTNPRNNNIYN), and 557–576 (LNVNTGGSSPRGSGTFTPRN). Over residues 657-668 (GSDGKGGGGGGD) the composition is skewed to gly residues. The segment covering 669–713 (VAATAATTSTSTSNGANSSGHANANRNNTNPKNSSPPSSSSAAAA) has biased composition (low complexity).

This sequence belongs to the ERT1/acuK family.

It localises to the nucleus. In terms of biological role, transcription factor which regulates nonfermentable carbon utilization. Activator of gluconeogenetic genes. In Ajellomyces capsulatus (strain G186AR / H82 / ATCC MYA-2454 / RMSCC 2432) (Darling's disease fungus), this protein is Transcription activator of gluconeogenesis HCBG_00867.